Consider the following 938-residue polypeptide: Glutamate receptor ionotropic, NMDA 1 (938 aa).

The signal sequence occupies residues Met1–Ala18. The Extracellular portion of the chain corresponds to Arg19–Gln559. 10 N-linked (GlcNAc...) asparagine glycosylation sites follow: Asn61, Asn203, Asn239, Asn276, Asn300, Asn350, Asn368, Asn440, Asn471, and Asn491. Cys79 and Cys308 are disulfide-bonded. Cystine bridges form between Cys420/Cys454 and Cys436/Cys455. Glycine contacts are provided by Pro516, Thr518, and Arg523. A helical membrane pass occupies residues Ser560–Leu580. Over Asp581 to Thr602 the chain is Cytoplasmic. An intramembrane region (discontinuously helical) is located at residues Leu603–Pro624. Residues Leu603 to Pro624 form a pore-forming region. The Cytoplasmic segment spans residues Arg625–Arg630. Residues Ile631 to Tyr647 traverse the membrane as a helical segment. The Extracellular segment spans residues Thr648–Asn812. A glycan (N-linked (GlcNAc...) asparagine) is linked at Asn674. Residues Ser688 and Asp732 each coordinate glycine. Cys744 and Cys798 are oxidised to a cystine. Asn771 carries an N-linked (GlcNAc...) asparagine glycan. The chain crosses the membrane as a helical span at residues Met813–Ile833. The Cytoplasmic segment spans residues Glu834–Ser938. A Phosphoserine modification is found at Lys877. Phosphoserine; by PKC occurs at positions 889, 890, 896, and 897. Residues Ser889–Ser938 are disordered. At Lys898 the chain carries Phosphoserine. The segment covering Val916 to Gly927 has biased composition (basic and acidic residues).

Belongs to the glutamate-gated ion channel (TC 1.A.10.1) family. NR1/GRIN1 subfamily. In terms of assembly, heterotetramer; the NMDAR subunits are modular and harbor tiered domains that function in concert to regulate opening and closing of the cation-selective ion channel pore. Forms heterotetrameric channels composed of two GluN1/zeta subunits (GRIN1), and two identical GluN2/epsilon subunits (GRIN2A, GRIN2B, GRIN2C or GRIN2D) or GluN3 subunits (GRIN3A or GRIN3B) (in vitro). Can also form heterotetrameric channels that contain at least two GluN1 subunits and at least two different GluN2 subunits (or a combination of one GluN2 and one GluN3 subunits) (in vitro). In vivo, the subunit composition may vary in function of the expression levels of the different subunits. Found in a complex with GRIN2A or GRIN2B, GRIN3A and PPP2CB. Found in a complex with GRIN2A or GRIN2B and GRIN3B;. Interacts with SNX27 (via PDZ domain); the interaction is required for recycling to the plasma membrane when endocytosed and prevent degradation in lysosomes. Interacts with DLG4 and MPDZ. Interacts with LRFN1 and LRFN2. Interacts with MYZAP. Found in a complex with DLG4 and PRR7. Found in a complex with GRIN2B and PRR7. Interacts with PRR7; the interaction is reduced following NMDA receptor activity. Post-translationally, NMDA is probably regulated by C-terminal phosphorylation of an isoform of NR1 by PKC. Dephosphorylated on Ser-897 probably by protein phosphatase 2A (PPP2CB). Its phosphorylated state is influenced by the formation of the NMDAR-PPP2CB complex and the NMDAR channel activity. Detected throughout the brain, in brain cortex, cerebellum, thalamus and olfactory bulb.

It is found in the cell membrane. Its subcellular location is the postsynaptic cell membrane. It localises to the synaptic cell membrane. The protein resides in the postsynaptic density membrane. The catalysed reaction is Ca(2+)(in) = Ca(2+)(out). It catalyses the reaction Na(+)(in) = Na(+)(out). It carries out the reaction K(+)(in) = K(+)(out). NMDA glutamate receptor activity is potentiated by Zn2(+) in a dose-dependent fashion. The potentiating effect of Zn2(+) is at submicromolar concentrations and its inhibitory action is at high micromolar to millimolar concentrations. Excitatory glycine receptors are inhibited by D-serine at 100uM. In terms of biological role, component of N-methyl-D-aspartate (NMDA) receptors (NMDARs) that function as heterotetrameric, ligand-gated cation channels with high calcium permeability and voltage-dependent block by Mg(2+). NMDARs participate in synaptic plasticity for learning and memory formation by contributing to the long-term potentiation (LTP). Channel activation requires binding of the neurotransmitter L-glutamate to the GluN2 subunit, glycine or D-serine binding to the GluN1 subunit, plus membrane depolarization to eliminate channel inhibition by Mg(2+). NMDARs mediate simultaneously the potasium efflux and the influx of calcium and sodium. Each GluN2 or GluN3 subunit confers differential attributes to channel properties, including activation, deactivation and desensitization kinetics, pH sensitivity, Ca2(+) permeability, and binding to allosteric modulators. Forms excitatory glycinergic receptor complexes with GluN3 alone which are activated by glycine binding to the GluN1 and GluN3 subunits. This chain is Glutamate receptor ionotropic, NMDA 1, found in Rattus norvegicus (Rat).